The primary structure comprises 425 residues: Protein CLP1 homolog (425 aa).

Residues Glu18, Lys59, and 121-126 each bind ATP; that span reads DVGKST.

The protein belongs to the Clp1 family. Clp1 subfamily.

The protein resides in the nucleus. Its function is as follows. Required for endonucleolytic cleavage during polyadenylation-dependent pre-mRNA 3'-end formation. The sequence is that of Protein CLP1 homolog (cbc) from Drosophila grimshawi (Hawaiian fruit fly).